Consider the following 129-residue polypeptide: Small ribosomal subunit protein uS11 (129 aa).

It belongs to the universal ribosomal protein uS11 family. Part of the 30S ribosomal subunit. Interacts with proteins S7 and S18. Binds to IF-3.

Located on the platform of the 30S subunit, it bridges several disparate RNA helices of the 16S rRNA. Forms part of the Shine-Dalgarno cleft in the 70S ribosome. The protein is Small ribosomal subunit protein uS11 of Halalkalibacterium halodurans (strain ATCC BAA-125 / DSM 18197 / FERM 7344 / JCM 9153 / C-125) (Bacillus halodurans).